A 257-amino-acid polypeptide reads, in one-letter code: 5-oxoprolinase subunit A (257 aa).

This sequence belongs to the LamB/PxpA family. As to quaternary structure, forms a complex composed of PxpA, PxpB and PxpC.

It carries out the reaction 5-oxo-L-proline + ATP + 2 H2O = L-glutamate + ADP + phosphate + H(+). Functionally, catalyzes the cleavage of 5-oxoproline to form L-glutamate coupled to the hydrolysis of ATP to ADP and inorganic phosphate. The chain is 5-oxoprolinase subunit A from Fusobacterium nucleatum subsp. nucleatum (strain ATCC 25586 / DSM 15643 / BCRC 10681 / CIP 101130 / JCM 8532 / KCTC 2640 / LMG 13131 / VPI 4355).